We begin with the raw amino-acid sequence, 348 residues long: Methylthioribose-1-phosphate isomerase (348 aa).

Substrate is bound by residues R53–A55, R93, and Q197. The active-site Proton donor is D238. Substrate is bound at residue N248–K249.

It belongs to the eIF-2B alpha/beta/delta subunits family. MtnA subfamily.

It carries out the reaction 5-(methylsulfanyl)-alpha-D-ribose 1-phosphate = 5-(methylsulfanyl)-D-ribulose 1-phosphate. It functions in the pathway amino-acid biosynthesis; L-methionine biosynthesis via salvage pathway; L-methionine from S-methyl-5-thio-alpha-D-ribose 1-phosphate: step 1/6. In terms of biological role, catalyzes the interconversion of methylthioribose-1-phosphate (MTR-1-P) into methylthioribulose-1-phosphate (MTRu-1-P). The polypeptide is Methylthioribose-1-phosphate isomerase (Gloeobacter violaceus (strain ATCC 29082 / PCC 7421)).